Here is a 103-residue protein sequence, read N- to C-terminus: Small ribosomal subunit protein uS10 (103 aa).

This sequence belongs to the universal ribosomal protein uS10 family. Part of the 30S ribosomal subunit.

In terms of biological role, involved in the binding of tRNA to the ribosomes. This chain is Small ribosomal subunit protein uS10, found in Bordetella parapertussis (strain 12822 / ATCC BAA-587 / NCTC 13253).